Here is a 112-residue protein sequence, read N- to C-terminus: Nucleoid-associated protein FTF0810c (112 aa).

The interval 1-27 is disordered; the sequence is MNFDMSKLMQQAQKMQEQMKKAQQERE. Residues 17 to 27 show a composition bias toward basic and acidic residues; sequence EQMKKAQQERE.

This sequence belongs to the YbaB/EbfC family. As to quaternary structure, homodimer.

It is found in the cytoplasm. The protein localises to the nucleoid. Binds to DNA and alters its conformation. May be involved in regulation of gene expression, nucleoid organization and DNA protection. This Francisella tularensis subsp. tularensis (strain FSC 198) protein is Nucleoid-associated protein FTF0810c.